A 144-amino-acid chain; its full sequence is Protein WAP-3 (144 aa).

An N-terminal signal peptide occupies residues 1 to 21 (MRSRSFLVLVAVFLICETLVA). The interval 28-49 (RGPKGQGQDPVEGQDQDEGQGP) is disordered. A region of interest (8 X 6 AA approximate tandem repeats) is located at residue Gly-34. Repeat copies occupy residues 34 to 39 (GQDPVE), 40 to 45 (GQDQDE), 46 to 51 (GQGPVK), 58 to 63 (GQDLVK), 64 to 69 (GQDPVE), 70 to 75 (GQDPVK), 76 to 81 (AQLPDK), and 82 to 87 (VQDPVK). A disordered region spans residues 64–85 (GQDPVEGQDPVKAQLPDKVQDP). The 48-residue stretch at 97 to 144 (LFPKPGVCPKIIFCPLVNPPIKCWRDSHCPGVKKCCPSLCGKGCVTPR) folds into the WAP domain. Disulfide bonds link Cys-104-Cys-132, Cys-110-Cys-136, Cys-119-Cys-131, and Cys-125-Cys-140.

As to expression, large intestine (relatively low levels).

In Sus scrofa (Pig), this protein is Protein WAP-3.